The following is a 158-amino-acid chain: Phosphopantetheine adenylyltransferase (158 aa).

Substrate is bound at residue serine 9. Residues serine 9–phenylalanine 10 and histidine 17 each bind ATP. The substrate site is built by lysine 41, valine 73, and lysine 87. ATP is bound by residues glycine 88–arginine 90, glutamate 98, and tyrosine 122–serine 128.

It belongs to the bacterial CoaD family. As to quaternary structure, homohexamer. It depends on Mg(2+) as a cofactor.

The protein resides in the cytoplasm. It carries out the reaction (R)-4'-phosphopantetheine + ATP + H(+) = 3'-dephospho-CoA + diphosphate. The protein operates within cofactor biosynthesis; coenzyme A biosynthesis; CoA from (R)-pantothenate: step 4/5. Reversibly transfers an adenylyl group from ATP to 4'-phosphopantetheine, yielding dephospho-CoA (dPCoA) and pyrophosphate. The chain is Phosphopantetheine adenylyltransferase from Mycobacterium sp. (strain JLS).